A 287-amino-acid polypeptide reads, in one-letter code: MLARFPLYLRLIRMDKPIGSLLLLWPTLNALWIASDGHPAPSLVAIFALGTLLMRSAGCAINDYADRDFDRHVKRTAERPLTSGKIRAWEAIAIAVGLALVSFLLILPLNGLTKELSVVAVFVAATYPFMKRFFAIPQAYLGIAFGFGIPMAFAAVQDTVPMIAWAMLAANVFWSVAYDTAYAMVDRDDDLKIGMRTSAITFGRHDVLAIMLCYAAMLGIYVWLGAALHFGWPYWAGWAAAAGCSIYHYTLIKDRERMACFAAFRHNNWLGGVLFAGIAAHYALAVR.

7 consecutive transmembrane segments (helical) span residues 30-50, 92-112, 133-153, 158-178, 207-227, 232-252, and 266-286; these read ALWI…FALG, IAIA…LNGL, FFAI…PMAF, DTVP…SVAY, VLAI…LGAA, WPYW…YTLI, and HNNW…ALAV.

Belongs to the UbiA prenyltransferase family. Mg(2+) serves as cofactor.

Its subcellular location is the cell inner membrane. The catalysed reaction is all-trans-octaprenyl diphosphate + 4-hydroxybenzoate = 4-hydroxy-3-(all-trans-octaprenyl)benzoate + diphosphate. The protein operates within cofactor biosynthesis; ubiquinone biosynthesis. Catalyzes the prenylation of para-hydroxybenzoate (PHB) with an all-trans polyprenyl group. Mediates the second step in the final reaction sequence of ubiquinone-8 (UQ-8) biosynthesis, which is the condensation of the polyisoprenoid side chain with PHB, generating the first membrane-bound Q intermediate 3-octaprenyl-4-hydroxybenzoate. In Burkholderia pseudomallei (strain 1106a), this protein is 4-hydroxybenzoate octaprenyltransferase.